Here is a 269-residue protein sequence, read N- to C-terminus: Phosphatidylglycerophosphate phosphatase 1, chloroplastic (269 aa).

A chloroplast-targeting transit peptide spans 1–33; the sequence is MRSVPGPSPPCTRSLAHSCRAAARGPCGSARPR. The disordered stretch occupies residues 25–46; the sequence is GPCGSARPRARSVSARAHSSEA. The segment covering 29-46 has biased composition (low complexity); that stretch reads SARPRARSVSARAHSSEA. The Phosphoryl acceptor signature appears at 103–107; that stretch reads DKDNT.

Belongs to the HAD-like hydrolase superfamily.

It is found in the plastid. Its subcellular location is the chloroplast. It catalyses the reaction a 1,2-diacyl-sn-glycero-3-phospho-(1'-sn-glycero-3'-phosphate) + H2O = a 1,2-diacyl-sn-glycero-3-phospho-(1'-sn-glycerol) + phosphate. The protein operates within phospholipid metabolism; phosphatidylglycerol biosynthesis; phosphatidylglycerol from CDP-diacylglycerol: step 2/2. Its function is as follows. Phosphatidylglycerophosphate phosphatase involved in the biosynthesis of phosphatidylglycerol (PG), a phosphoglycerolipid predominantly present in chloroplastic thylakoid membranes and which has important photosynthetic function. Required for thylakoid membranes development and chloroplast function. This is Phosphatidylglycerophosphate phosphatase 1, chloroplastic from Chlamydomonas reinhardtii (Chlamydomonas smithii).